The chain runs to 274 residues: Eukaryotic translation initiation factor 3 subunit G-2 (274 aa).

An RRM domain is found at 194 to 272 (SAVRISNLSE…LILCVEWSKP (79 aa)).

It belongs to the eIF-3 subunit G family. As to quaternary structure, component of the eukaryotic translation initiation factor 3 (eIF-3) complex. The eIF-3 complex interacts with pix.

It is found in the cytoplasm. Its function is as follows. RNA-binding component of the eukaryotic translation initiation factor 3 (eIF-3) complex, which is involved in protein synthesis of a specialized repertoire of mRNAs and, together with other initiation factors, stimulates binding of mRNA and methionyl-tRNAi to the 40S ribosome. The eIF-3 complex specifically targets and initiates translation of a subset of mRNAs involved in cell proliferation. This subunit can bind 18S rRNA. This Drosophila pseudoobscura pseudoobscura (Fruit fly) protein is Eukaryotic translation initiation factor 3 subunit G-2.